A 237-amino-acid polypeptide reads, in one-letter code: Ribonuclease PH (237 aa).

Phosphate contacts are provided by residues R86 and 124–126 (GTR).

This sequence belongs to the RNase PH family. In terms of assembly, homohexameric ring arranged as a trimer of dimers.

The enzyme catalyses tRNA(n+1) + phosphate = tRNA(n) + a ribonucleoside 5'-diphosphate. Its function is as follows. Phosphorolytic 3'-5' exoribonuclease that plays an important role in tRNA 3'-end maturation. Removes nucleotide residues following the 3'-CCA terminus of tRNAs; can also add nucleotides to the ends of RNA molecules by using nucleoside diphosphates as substrates, but this may not be physiologically important. Probably plays a role in initiation of 16S rRNA degradation (leading to ribosome degradation) during starvation. The sequence is that of Ribonuclease PH from Alteromonas mediterranea (strain DSM 17117 / CIP 110805 / LMG 28347 / Deep ecotype).